Here is a 239-residue protein sequence, read N- to C-terminus: Putative ankyrin repeat protein RBE_0489 (239 aa).

3 ANK repeats span residues 23-52 (ISSR…SPNA), 80-109 (GIDT…FINA), and 113-143 (FGFT…SLTL).

This Rickettsia bellii (strain RML369-C) protein is Putative ankyrin repeat protein RBE_0489.